We begin with the raw amino-acid sequence, 209 residues long: Probable septum site-determining protein MinC (209 aa).

The protein belongs to the MinC family. Interacts with MinD and FtsZ.

Cell division inhibitor that blocks the formation of polar Z ring septums. Rapidly oscillates between the poles of the cell to destabilize FtsZ filaments that have formed before they mature into polar Z rings. Prevents FtsZ polymerization. This is Probable septum site-determining protein MinC from Clostridium kluyveri (strain NBRC 12016).